Consider the following 229-residue polypeptide: Potassium/proton antiporter CemA (229 aa).

The next 4 membrane-spanning stretches (helical) occupy residues 7–27, 114–134, 154–174, and 189–209; these read FTPL…SLSL, IICF…LLIL, ILLL…ELMI, and IISG…KYWI.

It belongs to the CemA family.

The protein resides in the plastid. It is found in the chloroplast inner membrane. It carries out the reaction K(+)(in) + H(+)(out) = K(+)(out) + H(+)(in). Functionally, contributes to K(+)/H(+) antiport activity by supporting proton efflux to control proton extrusion and homeostasis in chloroplasts in a light-dependent manner to modulate photosynthesis. Prevents excessive induction of non-photochemical quenching (NPQ) under continuous-light conditions. Indirectly promotes efficient inorganic carbon uptake into chloroplasts. In Vitis vinifera (Grape), this protein is Potassium/proton antiporter CemA.